The following is a 369-amino-acid chain: MAGYLPEPLRMMVTNPAISDFTSDGPLPYALRQKFTGWPPPPAAADISLASQTVLVTGATSGVGLEAARQLAQLGPRLLILGARNLSKADGVKRQLEQDTPHVAVQVAKLDLEDLSSVDRFVDGLHASAIHLDLALLNAGFFANDDRMTPDGYSSLFQVNFLSTAYLAFRLLPLLQTTTTAPEASPQGPRLVLVTSEAHAWTTFPVPPEPAENSLPILSSFRQKESLGSADDQYYRAKLLLALIGKELSRRLTTMQMATSVVITTPGFCASNFFPDSVMTRLIQLISARSIQQGGALHVFAATAQGPQMHGAYLRDGKPTGLSKFAEGPQGQILQQRLWVEMEQFLAGRGYLLSSILKPSSPLQIDGPV.

NADP(+) is bound by residues K88, D111, N138, Y234, and K238. Catalysis depends on Y234, which acts as the Proton donor. Residue K238 is the Lowers pKa of active site Tyr of the active site.

This sequence belongs to the short-chain dehydrogenases/reductases (SDR) family.

It functions in the pathway antifungal biosynthesis. Its function is as follows. Short chain dehydrogenase; part of the gene cluster that mediates the biosynthesis of the tetrahydropyranyl antifungal agent restricticin that acts as an inhibitor of CYP51 and blocks the ergosterol biosynthesis. The highly reducing polyketide synthase rstn3, the short chain dehydrogenase rstn4, the cyclase rstn5, the FAD-dependent monooxygenase rstn6 and the enoylreductase rstn7 are required to generate the first stable intermediate desmethylrestrictinol. Rstn3 with rstn7 biosynthesize the first polyketide chain intermediate that is reduced by rstn4, followed by epoxidation by rstn6 before 6-endo cyclization via epoxide opening by rstn5 leads to desmethylrestrictinol. The methyltransferase rstn1 then catalyzes the C4 O-methylation of desmethylrestrictinol to produce restrictinol, and the nonribosomal peptide synthetase rstn8 catalyzes the C3 esterification of restrictinol with glycine that leads to restricticin. In Aspergillus nomiae NRRL (strain ATCC 15546 / NRRL 13137 / CBS 260.88 / M93), this protein is Short chain dehydrogenase rstn4.